The primary structure comprises 538 residues: Myeloid cell nuclear differentiation antigen-like protein (538 aa).

Residues 1–87 (MAEYKKIVLL…AKKLKTEKAK (87 aa)) form the Pyrin domain. Residues 120 to 306 (SYKSVPSSKK…PQPQNQNIPR (187 aa)) are disordered. 2 stretches are compositionally biased toward basic and acidic residues: residues 135 to 153 (AKTEGEKKNKLTQDQDHLP) and 245 to 262 (RREEETGVKKSKAAKEPD). Residues 276–305 (SPILHSSSSASSNIPSATNQKPQPQNQNIP) show a composition bias toward low complexity. An HIN-200 domain is found at 299–499 (PQNQNIPRGA…CGDHSFVKIK (201 aa)).

This sequence belongs to the HIN-200 family. As to expression, highest expression observed in spleen and thymus with moderate levels in bone marrow, lung, skin and heart, low levels in muscle, liver and intestine and little or no expression in brain and pancreas.

The protein resides in the nucleus. In terms of biological role, suppresses cell growth when expressed ectopically. The chain is Myeloid cell nuclear differentiation antigen-like protein from Mus musculus (Mouse).